Reading from the N-terminus, the 137-residue chain is Large ribosomal subunit protein uL24 (137 aa).

Belongs to the universal ribosomal protein uL24 family. In terms of assembly, part of the 50S ribosomal subunit.

Functionally, one of two assembly initiator proteins, it binds directly to the 5'-end of the 23S rRNA, where it nucleates assembly of the 50S subunit. Its function is as follows. Located at the polypeptide exit tunnel on the outside of the subunit. The polypeptide is Large ribosomal subunit protein uL24 (Sulfurisphaera tokodaii (strain DSM 16993 / JCM 10545 / NBRC 100140 / 7) (Sulfolobus tokodaii)).